The sequence spans 248 residues: Coproheme decarboxylase (248 aa).

Residues R130, 144-148 (YPMDK), H171, Q184, and S222 contribute to the Fe-coproporphyrin III site. Residue Y144 is part of the active site.

The protein belongs to the ChdC family. Type 1 subfamily. It depends on Fe-coproporphyrin III as a cofactor.

The enzyme catalyses Fe-coproporphyrin III + 2 H2O2 + 2 H(+) = heme b + 2 CO2 + 4 H2O. The catalysed reaction is Fe-coproporphyrin III + H2O2 + H(+) = harderoheme III + CO2 + 2 H2O. It catalyses the reaction harderoheme III + H2O2 + H(+) = heme b + CO2 + 2 H2O. Its pathway is porphyrin-containing compound metabolism; protoheme biosynthesis. In terms of biological role, involved in coproporphyrin-dependent heme b biosynthesis. Catalyzes the decarboxylation of Fe-coproporphyrin III (coproheme) to heme b (protoheme IX), the last step of the pathway. The reaction occurs in a stepwise manner with a three-propionate intermediate. This Geobacillus sp. (strain WCH70) protein is Coproheme decarboxylase.